The primary structure comprises 285 residues: Protease HtpX homolog (285 aa).

A run of 2 helical transmembrane segments spans residues 7-27 and 30-50; these read TAMLMAAITALFIVIGGMIGG and GMTIALLFALGMNFFSYWFSD. His-131 contributes to the Zn(2+) binding site. The active site involves Glu-132. Zn(2+) is bound at residue His-135. Helical transmembrane passes span 146-166 and 177-197; these read ITATMAGAISALANFAMFFGG and IAGIAVALLAPIAGALIQMAI. Glu-202 is a Zn(2+) binding site.

It belongs to the peptidase M48B family. The cofactor is Zn(2+).

The protein resides in the cell inner membrane. The sequence is that of Protease HtpX homolog from Burkholderia cenocepacia (strain HI2424).